Reading from the N-terminus, the 188-residue chain is MSTPSLDNLIELGAISEAQGLQGQVKVRPHSPDPVALLSSKVVWLSLLPRRSAGALSSTEEATLTQYKVKSAKMHSGNVVLTLDGVSDRDQALALKGARILLDRDAFPKAESDSYYWVDLIGCKAKNLQDEILGDVIDVTENGAHGVIAIGDISTKTIQYLVPFVKEVVRNVDLPNKLLTLDWQSDWV.

The PRC barrel domain occupies 112–187 (SDSYYWVDLI…LLTLDWQSDW (76 aa)).

This sequence belongs to the RimM family. Binds ribosomal protein uS19.

The protein resides in the cytoplasm. An accessory protein needed during the final step in the assembly of 30S ribosomal subunit, possibly for assembly of the head region. Essential for efficient processing of 16S rRNA. May be needed both before and after RbfA during the maturation of 16S rRNA. It has affinity for free ribosomal 30S subunits but not for 70S ribosomes. In Polynucleobacter asymbioticus (strain DSM 18221 / CIP 109841 / QLW-P1DMWA-1) (Polynucleobacter necessarius subsp. asymbioticus), this protein is Ribosome maturation factor RimM.